The following is a 377-amino-acid chain: N-acetyldiaminopimelate deacetylase (377 aa).

The active site involves aspartate 70. The active-site Proton acceptor is the glutamate 129.

This sequence belongs to the peptidase M20A family. N-acetyldiaminopimelate deacetylase subfamily.

It carries out the reaction N-acetyl-(2S,6S)-2,6-diaminopimelate + H2O = (2S,6S)-2,6-diaminopimelate + acetate. The protein operates within amino-acid biosynthesis; L-lysine biosynthesis via DAP pathway; LL-2,6-diaminopimelate from (S)-tetrahydrodipicolinate (acetylase route): step 3/3. Its function is as follows. Catalyzes the conversion of N-acetyl-diaminopimelate to diaminopimelate and acetate. The polypeptide is N-acetyldiaminopimelate deacetylase (Streptococcus thermophilus (strain ATCC BAA-491 / LMD-9)).